Reading from the N-terminus, the 494-residue chain is MAKDKASRRPRAETPKGFRDYFGADVTERKAMLDAVAEVYHRYGFDPLETSAVETVEALGKFLPDVDRPNEGVFGWQDEDGDWLALRYDLTAPLARVAAQFRNDLPSPYRRYAMGPVWRNEKPGPGRFRQFYQCDADTVGSASVAADAEICAMLSDALEVVGIPRGDYIVRVNNRKVLNGVMEVAGVLDPSDPAKFEAERGIVLRAIDKIDRLGETGVRALLGSGRKDESGDFTKGAGLSDEQAEVVMGFMAARRDTGAATAARLRELVGASTLGCEGVQELETIAELLDVQGYGPDRIVVDPSVVRGLGYYTGPVFEAELTFEILDEKGRKRQFGSVAGGGRYDDLVKRFTGQSVPATGVSIGVDRLLAALRAKGRAGAEAQGPVVVTVMDRDRMGDYMAMVGELRRAGLRAELYLGNPKNFGNQLKYADARKSPVAVIQGSDEAARGVVVLKDLVLGAQIAAGASLEEWKSRPAQVEVPRADLVRAVQDMLS.

It belongs to the class-II aminoacyl-tRNA synthetase family. Homodimer.

The protein localises to the cytoplasm. It catalyses the reaction tRNA(His) + L-histidine + ATP = L-histidyl-tRNA(His) + AMP + diphosphate + H(+). The sequence is that of Histidine--tRNA ligase from Cereibacter sphaeroides (strain ATCC 17023 / DSM 158 / JCM 6121 / CCUG 31486 / LMG 2827 / NBRC 12203 / NCIMB 8253 / ATH 2.4.1.) (Rhodobacter sphaeroides).